The following is a 142-amino-acid chain: Hemoglobin subunit alpha-A (142 aa).

Positions 2–142 (VLTAGDKANV…VATALTSKYR (141 aa)) constitute a Globin domain. Positions 59 and 88 each coordinate heme b.

It belongs to the globin family. In terms of assembly, heterotetramer of two alpha-A chains and two beta chains. As to expression, red blood cells.

In terms of biological role, involved in oxygen transport from the lung to the various peripheral tissues. This chain is Hemoglobin subunit alpha-A, found in Chelonoidis niger (Galapagos giant tortoise).